The primary structure comprises 539 residues: Capsid protein VP1 (539 aa).

Residues 1 to 221 (MKMASNDANP…FIFLVPPTVE (221 aa)) are shell domain. The tract at residues 222 to 274 (SRTKPFTVPVLTVEEMSNSRFPIPLEKLYTGPSSAFVVQPQNGRCTTDGVLLG) is P1 sub-domain 1. A protruding domain region spans residues 222-539 (SRTKPFTVPV…GNGTGRRRAL (318 aa)). The P2 sub-domain stretch occupies residues 275-417 (TTQLSAVNIC…SGRTGHNVHL (143 aa)). Residues 418–539 (APAVAPTFPG…GNGTGRRRAL (122 aa)) form a P1 sub-domain 2 region.

It belongs to the caliciviridae capsid protein family. In terms of assembly, homodimer. Homomultimer. Interacts with the minor capsid protein VP2. Interacts (via C-terminus) with host type I histo-blood group structures antigens at the surface of target cells. In terms of processing, may be cleaved by host protease to generate soluble capsid protein. Assembled capsid cannot be cleaved.

The protein resides in the virion. The protein localises to the host cytoplasm. Capsid protein self assembles to form an icosahedral capsid with a T=3 symmetry, about 38 nm in diameter, and consisting of 180 capsid proteins. A smaller form of capsid with a diameter of 23 nm might be capsid proteins assembled as icosahedron with T=1 symmetry. The capsid encapsulates the genomic RNA and is decorated with VP2 proteins. Attaches virion to target cells by binding histo-blood group antigens (HBGAs) present on gastroduodenal epithelial cells. Its function is as follows. The soluble capsid protein may play a role in viral immunoevasion. This Homo sapiens (Human) protein is Capsid protein VP1.